Here is a 489-residue protein sequence, read N- to C-terminus: MLTKLLKISCTSRQCTFAKPYQAIPGPRGPFGMGNLYNYLPGIGSYSWLRLHQAGQDKYEKYGAIVRETIVPGQDIVWLYDPKDIALLLNERDCPQRRSHLALAQYRKSRPDVYKTTGLLPTNGPEWWRIRAQVQKELSAPKSVRNFVRQVDGVTKEFIRFLQESRNGGAIDMLPKLTRLNLELTCLLTFGARLQSFTAQEQDPRSRSTRLMDAAETTNSCILPTDQGLQLWRFLETPSFRKLSQAQSYMESVALELVEENVRNGSVGSSLISAYVKNPELDRSDVVGTAADLLLAGIDTTSYASAFLLYHIARNPEVQQKLHEEARRVLPSAKDELSMDALRTDITYTRAVLKESLRLNPIAVGVGRILNQDAIFSGYFVPKGTTVVTQNMVACRLEQHFQDPLRFQPDRWLQHRSALNPYLVLPFGHGMRACIARRLAEQNMHILLLRLLREYELIWSGSDDEMGVKTLLINKPDAPVLIDLRLRRE.

C434 serves as a coordination point for heme.

Belongs to the cytochrome P450 family. Heme serves as cofactor. Complex coexpression pattern of dib (disembodied) and sad (shade) in the early embryo that restricts to the prothoracic gland cells of the developing ring gland during late embryogenesis. In larvae and adult, coexpression is seen in prothoracic gland and follicle cells of the ovary. In adults, coexpression is seen in the follicle cells.

It is found in the mitochondrion membrane. It catalyses the reaction 2,22-dideoxyecdysone + 2 reduced [adrenodoxin] + O2 + 2 H(+) = 2-deoxyecdysone + 2 oxidized [adrenodoxin] + H2O. It participates in steroid biosynthesis; ecdysteroid biosynthesis. In terms of biological role, required for CNS development; negatively regulates glial cell division in the embryonic midline. Involved in the metabolism of insect hormones; responsible for ecdysteroid C22-hydroxylase activity. May be involved in the breakdown of synthetic insecticides. The protein is Cytochrome P450 302a1, mitochondrial of Drosophila melanogaster (Fruit fly).